A 389-amino-acid chain; its full sequence is S-adenosylmethionine synthase (389 aa).

H15 contributes to the ATP binding site. D17 serves as a coordination point for Mg(2+). K(+) is bound at residue E43. L-methionine contacts are provided by E56 and Q99. A flexible loop region spans residues 99–109 (QSPDIAQGVNE). ATP contacts are provided by residues 166-168 (DAK), 234-235 (RF), D243, 249-250 (RK), A266, and K270. Position 243 (D243) interacts with L-methionine. Position 274 (K274) interacts with L-methionine.

The protein belongs to the AdoMet synthase family. Homotetramer; dimer of dimers. Mg(2+) is required as a cofactor. The cofactor is K(+).

The protein localises to the cytoplasm. The enzyme catalyses L-methionine + ATP + H2O = S-adenosyl-L-methionine + phosphate + diphosphate. It functions in the pathway amino-acid biosynthesis; S-adenosyl-L-methionine biosynthesis; S-adenosyl-L-methionine from L-methionine: step 1/1. Catalyzes the formation of S-adenosylmethionine (AdoMet) from methionine and ATP. The overall synthetic reaction is composed of two sequential steps, AdoMet formation and the subsequent tripolyphosphate hydrolysis which occurs prior to release of AdoMet from the enzyme. The sequence is that of S-adenosylmethionine synthase from Neisseria gonorrhoeae (strain ATCC 700825 / FA 1090).